Reading from the N-terminus, the 705-residue chain is Dolichyl-diphosphooligosaccharide--protein glycosyltransferase subunit STT3A (705 aa).

The Cytoplasmic portion of the chain corresponds to 1-17; the sequence is MTKLGFLRLSYEKQDTL. A helical transmembrane segment spans residues 18 to 38; the sequence is LKLLILSMAAVLSFSTRLFAV. Residues 39-119 lie on the Lumenal side of the membrane; that stretch reads LRFESVIHEF…IDIRNVCVFL (81 aa). A DXD motif 1 motif is present at residues 47–49; it reads EFD. D49 is a binding site for Mn(2+). Residues 120–138 form a helical membrane-spanning segment; that stretch reads APLFSSFTTIVTYHLTKEL. Residues 139–140 are Cytoplasmic-facing; that stretch reads KD. The chain crosses the membrane as a helical span at residues 141–158; sequence AGAGLLAAAMIAVVPGYI. At 159 to 169 the chain is on the lumenal side; sequence SRSVAGSYDNE. The Mn(2+) site is built by D167 and E169. Positions 167 to 169 match the DXD motif 2 motif; sequence DNE. The helical transmembrane segment at 170-189 threads the bilayer; sequence GIAIFCMLLTYYMWIKAVKT. The Cytoplasmic segment spans residues 190–191; sequence GS. A helical membrane pass occupies residues 192–206; it reads IYWAAKCALAYFYMV. Over 207-211 the chain is Lumenal; the sequence is SSWGG. Residues 212–228 form a helical membrane-spanning segment; the sequence is YVFLINLIPLHVLVLML. The Cytoplasmic segment spans residues 229 to 233; the sequence is TGRFS. A helical transmembrane segment spans residues 234–259; it reads HRIYVAYCTVYCLGTILSMQISFVGF. Topologically, residues 260-267 are lumenal; the sequence is QPVLSSEH. A helical membrane pass occupies residues 268-287; the sequence is MAAFGVFGLCQIHAFVDYLR. Over 288–300 the chain is Cytoplasmic; it reads SKLNPQQFEVLFR. The helical transmembrane segment at 301 to 321 threads the bilayer; it reads SVISLVGFVLLTIGALLMLTG. Residues 322–356 lie on the Lumenal side of the membrane; that stretch reads KISPWTGRFYSLLDPSYAKNNIPIIASVSEHQPTT. The short motif at 348-351 is the SVSE motif element; that stretch reads SVSE. The chain crosses the membrane as a helical span at residues 357–379; the sequence is WSSYYFDLQLLVFMFPVGLYYCF. Residues 380–385 lie on the Cytoplasmic side of the membrane; the sequence is SNLSDA. A helical membrane pass occupies residues 386–402; that stretch reads RIFIIMYGVTSMYFSAV. Residues 403-406 lie on the Lumenal side of the membrane; that stretch reads MVRL. R405 contacts dolichyl diphosphooligosaccharide. The chain crosses the membrane as a helical span at residues 407-428; that stretch reads MLVLAPVMCILSGIGVSQVLST. The Cytoplasmic segment spans residues 429-453; the sequence is YMKNLDISRQDKKSKKQQDSTYPIK. The helical transmembrane segment at 454–473 threads the bilayer; the sequence is NEVASGMILVMAFFLITYTF. Topologically, residues 474–705 are lumenal; that stretch reads HSTWVTSEAY…DLDNRGLSRT (232 aa). Residues 525–527 are interacts with target acceptor peptide in protein substrate; the sequence is WWD. The WWDYG motif signature appears at 525–529; it reads WWDYG. Y530 provides a ligand contact to dolichyl diphosphooligosaccharide. Residues N537 and N544 are each glycosylated (N-linked (GlcNAc...) asparagine). An N-linked (GlcNAc...) (high mannose) asparagine glycan is attached at N548. The DK motif motif lies at 592–599; it reads DINKFLWM.

The protein belongs to the STT3 family. In terms of assembly, component of the oligosaccharyltransferase (OST) complex. There are 2 OST complexes, OST-A and OST-B, which contain STT3A or STT3B as catalytic subunit, respectively. OST-A and OST-B contain common core subunits RPN1, RPN2, OST48, OST4, DAD1 and TMEM258, and OST-A contains DC2/OSTC and KRTCAP2/KCP2 specific accessory subunits. OST-A complex assembly occurs through the formation of 3 subcomplexes. Subcomplex 1 contains RPN1 and TMEM258, subcomplex 2 contains the OST-A-specific subunits STT3A, DC2/OSTC, and KCP2 as well as the core subunit OST4, and subcomplex 3 contains RPN2, DAD1, and OST48. The OST-A complex can form stable complexes with the Sec61 complex or with both the Sec61 and TRAP complexes. Mg(2+) serves as cofactor. Requires Mn(2+) as cofactor.

It is found in the endoplasmic reticulum membrane. It carries out the reaction a di-trans,poly-cis-dolichyl diphosphooligosaccharide + L-asparaginyl-[protein] = N(4)-(oligosaccharide-(1-&gt;4)-N-acetyl-beta-D-glucosaminyl-(1-&gt;4)-N-acetyl-beta-D-glucosaminyl)-L-asparaginyl-[protein] + a di-trans,poly-cis-dolichyl diphosphate + H(+). It participates in protein modification; protein glycosylation. In terms of biological role, catalytic subunit of the oligosaccharyl transferase (OST) complex that catalyzes the initial transfer of a defined glycan (Glc(3)Man(9)GlcNAc(2) in eukaryotes) from the lipid carrier dolichol-pyrophosphate to an asparagine residue within an Asn-X-Ser/Thr consensus motif in nascent polypeptide chains, the first step in protein N-glycosylation. N-glycosylation occurs cotranslationally and the complex associates with the Sec61 complex at the channel-forming translocon complex that mediates protein translocation across the endoplasmic reticulum (ER). All subunits are required for a maximal enzyme activity. This subunit contains the active site and the acceptor peptide and donor lipid-linked oligosaccharide (LLO) binding pockets. STT3A is present in the majority of OST complexes and mediates cotranslational N-glycosylation of most sites on target proteins, while STT3B-containing complexes are required for efficient post-translational glycosylation and mediate glycosylation of sites that have been skipped by STT3A. STT3A-containing OST-A complex is also required to prevent hyperglycosylation of some target proteins by preventing glycosylation of facultative sites before folding of target proteins is completed. In Bos taurus (Bovine), this protein is Dolichyl-diphosphooligosaccharide--protein glycosyltransferase subunit STT3A.